The primary structure comprises 595 residues: MGKKSRVKTQKSGTGATATVSPKEILNLTSELLQKCSSPAPGPGKEWEEYVQIRTLVEKIRKKQKGLSVTFDGKREDYFPDLMKWASENGASVEGFEMVNFKEEGFGLRATRDIKAEELFLWVPRKLLMTVESAKNSVLGPLYSQDRILQAMGNIALAFHLLCERANPNSFWQPYIQTLPSEYDTPLYFEEDEVRYLQSTQAIHDVFSQYKNTARQYAYFYKVIQTHPHANKLPLKDSFTYEDYRWAVSSVMTRQNQIPTEDGSRVTLALIPLWDMCNHTNGLITTGYNLEDDRCECVALQDFRAGEQIYIFYGTRSNAEFVIHSGFFFDNNSHDRVKIKLGVSKSDRLYAMKAEVLARAGIPTSSVFALHFTEPPISAQLLAFLRVFCMTEEELKEHLLGDSAIDRIFTLGNSEFPVSWDNEVKLWTFLEDRASLLLKTYKTTIEEDKSVLKNQDLSVRAKMAIKLRLGEKEILEKAVKSAAVNREFYRQQMEEKAPLPKYEEGNLGLLESSVGDSRLPLVLRNLEEEAGVQDALNIREAISKAQATENGLVNGENSVPNGTRSENENLNQEESKRAVEDAKGSSSDNTAEVKE.

The interval 1-22 (MGKKSRVKTQKSGTGATATVSP) is disordered. Over residues 10 to 20 (QKSGTGATATV) the composition is skewed to polar residues. Residues Arg-75, 104-106 (EGF), Arg-254, 275-279 (DMCNH), and 325-327 (SGF) contribute to the S-adenosyl-L-methionine site. The 221-residue stretch at 94-314 (EGFEMVNFKE…AGEQIYIFYG (221 aa)) folds into the SET domain. Residue Ser-513 is modified to Phosphoserine. Polar residues predominate over residues 549 to 572 (ENGLVNGENSVPNGTRSENENLNQ). Residues 549–595 (ENGLVNGENSVPNGTRSENENLNQEESKRAVEDAKGSSSDNTAEVKE) are disordered. Basic and acidic residues predominate over residues 573–583 (EESKRAVEDAK). Residues 584–595 (GSSSDNTAEVKE) are compositionally biased toward polar residues.

It belongs to the class V-like SAM-binding methyltransferase superfamily. SETD3 actin-histidine methyltransferase family. As to quaternary structure, interacts with MYOD1. In terms of processing, phosphorylated by GSK3B, which is required for recognition by the SCF(FBXW7) complex and subsequent degradation. Post-translationally, ubiquitinated by the SCF(FBXW7) complex following phosphorylation by GSK3B, leading to its degradation by the proteasome.

It localises to the cytoplasm. The protein resides in the nucleus. It catalyses the reaction L-histidyl-[protein] + S-adenosyl-L-methionine = N(tele)-methyl-L-histidyl-[protein] + S-adenosyl-L-homocysteine + H(+). In terms of biological role, protein-histidine N-methyltransferase that specifically mediates 3-methylhistidine (tele-methylhistidine) methylation of actin at 'His-73'. Histidine methylation of actin is required for smooth muscle contraction of the laboring uterus during delivery. Does not have protein-lysine N-methyltransferase activity and probably only catalyzes histidine methylation of actin. The chain is Actin-histidine N-methyltransferase from Papio anubis (Olive baboon).